Reading from the N-terminus, the 352-residue chain is Chorismate synthase (352 aa).

2 residues coordinate NADP(+): Arg48 and Arg54. Residues 125–127, 238–239, Gly278, 293–297, and Arg319 each bind FMN; these read RSS, NA, and KPTSS.

The protein belongs to the chorismate synthase family. As to quaternary structure, homotetramer. FMNH2 is required as a cofactor.

It carries out the reaction 5-O-(1-carboxyvinyl)-3-phosphoshikimate = chorismate + phosphate. Its pathway is metabolic intermediate biosynthesis; chorismate biosynthesis; chorismate from D-erythrose 4-phosphate and phosphoenolpyruvate: step 7/7. Its function is as follows. Catalyzes the anti-1,4-elimination of the C-3 phosphate and the C-6 proR hydrogen from 5-enolpyruvylshikimate-3-phosphate (EPSP) to yield chorismate, which is the branch point compound that serves as the starting substrate for the three terminal pathways of aromatic amino acid biosynthesis. This reaction introduces a second double bond into the aromatic ring system. This chain is Chorismate synthase, found in Bordetella petrii (strain ATCC BAA-461 / DSM 12804 / CCUG 43448).